The following is a 130-amino-acid chain: EG45-like domain containing protein 2 (130 aa).

Positions 1 to 25 (MIKMAVKFVVVMIVFAQILAPIAEA) are cleaved as a signal peptide. Residues 28–130 (GKAVYYDPPY…GNIRVVYTPI (103 aa)) form the Expansin-like EG45 domain. An N-linked (GlcNAc...) asparagine glycan is attached at N106.

As to expression, expressed in unstressed leaves.

Its subcellular location is the secreted. Plays a systemic role in water and solute homeostasis. This chain is EG45-like domain containing protein 2 (EGC2), found in Arabidopsis thaliana (Mouse-ear cress).